Here is a 58-residue protein sequence, read N- to C-terminus: U-scoloptoxin(14)-Sa1a (58 aa).

Positions 1 to 18 are cleaved as a signal peptide; sequence MNRILGMIFLFCLISCYA.

This sequence belongs to the scoloptoxin-14 family. Contains 4 disulfide bonds. In terms of tissue distribution, expressed by the venom gland.

The protein localises to the secreted. This chain is U-scoloptoxin(14)-Sa1a, found in Scolopendra alternans (Florida Keys giant centipede).